A 233-amino-acid chain; its full sequence is MSDSAPEIETPVEEAPKAATPAKSPAKSPGRAKKAKKDGSDKPKKPKAIPTHPPVSEMVVNALKTLNEKGGSSVIAIKKFLVATYKVEIEKLLPFIKKFLKGAVLKGEVLQVKGTGASGSFKMPPPAKKVDKPEAAPKKKAPRPKREIEKKEKKVVAKKPKPAVEKKAAKPAAKKAVAKPAAKKAAAKPAAKEPAAKASPKKAAAKPKAKPTPKKSTAAKPKAAAKKPAKKSK.

Disordered regions lie at residues 1–55 (MSDS…HPPV) and 115–233 (TGAS…KKSK). The span at 17-29 (KAATPAKSPAKSP) shows a compositional bias: low complexity. Positions 51–125 (THPPVSEMVV…GASGSFKMPP (75 aa)) constitute an H15 domain. Composition is skewed to basic and acidic residues over residues 128–137 (KKVDKPEAAP) and 144–155 (PKREIEKKEKKV). Basic residues-rich tracts occupy residues 172-186 (AAKK…KKAA), 199-213 (SPKK…KPTP), and 223-233 (AAAKKPAKKSK).

The protein belongs to the histone H1/H5 family.

The protein resides in the nucleus. It is found in the chromosome. Histones H1 are necessary for the condensation of nucleosome chains into higher-order structures. The chain is Histone H1-I from Glyptotendipes salinus (Midge).